The sequence spans 284 residues: Pantothenate synthetase (284 aa).

30–37 (MGNLHDGH) contributes to the ATP binding site. The active-site Proton donor is the His37. Gln61 serves as a coordination point for (R)-pantoate. Gln61 is a binding site for beta-alanine. An ATP-binding site is contributed by 149-152 (GEKD). Gln155 serves as a coordination point for (R)-pantoate. ATP-binding positions include Val178 and 186-189 (LSSR).

Belongs to the pantothenate synthetase family. Homodimer.

It is found in the cytoplasm. The catalysed reaction is (R)-pantoate + beta-alanine + ATP = (R)-pantothenate + AMP + diphosphate + H(+). Its pathway is cofactor biosynthesis; (R)-pantothenate biosynthesis; (R)-pantothenate from (R)-pantoate and beta-alanine: step 1/1. Catalyzes the condensation of pantoate with beta-alanine in an ATP-dependent reaction via a pantoyl-adenylate intermediate. This chain is Pantothenate synthetase, found in Klebsiella pneumoniae (strain 342).